We begin with the raw amino-acid sequence, 104 residues long: Large ribosomal subunit protein uL24 (104 aa).

Positions 41-61 (ISKKHKKPTPNEKQSGGIFEK) are disordered.

The protein belongs to the universal ribosomal protein uL24 family. As to quaternary structure, part of the 50S ribosomal subunit.

One of two assembly initiator proteins, it binds directly to the 5'-end of the 23S rRNA, where it nucleates assembly of the 50S subunit. Functionally, one of the proteins that surrounds the polypeptide exit tunnel on the outside of the subunit. This Wigglesworthia glossinidia brevipalpis protein is Large ribosomal subunit protein uL24.